Here is a 406-residue protein sequence, read N- to C-terminus: Tyrosine--tRNA ligase (406 aa).

Tyrosine 35 is a binding site for L-tyrosine. The short motif at 40–49 is the 'HIGH' region element; sequence ATSASLHIGH. 2 residues coordinate L-tyrosine: tyrosine 167 and glutamine 171. The 'KMSKS' region motif lies at 227-231; the sequence is KMGKS. Lysine 230 contributes to the ATP binding site. The region spanning 341–405 is the S4 RNA-binding domain; sequence ILLVDLMVLA…IGKKKILRIV (65 aa).

Belongs to the class-I aminoacyl-tRNA synthetase family. TyrS type 1 subfamily. Homodimer.

It is found in the cytoplasm. It carries out the reaction tRNA(Tyr) + L-tyrosine + ATP = L-tyrosyl-tRNA(Tyr) + AMP + diphosphate + H(+). Its function is as follows. Catalyzes the attachment of tyrosine to tRNA(Tyr) in a two-step reaction: tyrosine is first activated by ATP to form Tyr-AMP and then transferred to the acceptor end of tRNA(Tyr). This Borrelia duttonii (strain Ly) protein is Tyrosine--tRNA ligase.